Here is a 750-residue protein sequence, read N- to C-terminus: ARQAAAPLLPGVLLLFSILPASQQGGVPGAIPGGGVPGGGFFPGAGVGGLGAGLGAGLGAGGKPLKPGVSGLGGLGPLGLQPGAGVGGLGAGLGAFPGAAFPGAASAAALKAAAKAGAGLGGVGGIGGLGGVGGVGVPGGLGVPGVVQPGVGAAGKPPKVPGAGIPGAFPGGGVLPGAGIRFPGVGVLPGVPTGTGIKAKGPGAGAFAGIPGGYRLPFVNGLGPGGIGAGVLAGKAGYPTGTGVGAQAAAAKAAAKYGAGVLPGAGGIPGVGGVVPGVGVVPGAGVGGPAAAAAAAKAAAKAGAYGAGVLPGAGGVPGVVPGVGVVPGLVPGVGGIPGVAGVGTPAGAAAAAAKAAKYGAGVPGVGVPGVGIGGVPGVPGVPGVPGVPGVPGVPGVPGVPGVPGVPGVPGVVPGVGVGGPAAAAAAKAAAKAAAFGAGRVPGVGVPGAVPGVGVPGVGVPGVGVPGVGVPGVGVPGVGVPGVGVPGVGVPGVGVPGVGVPGLVPGAGPAAAAKAAAKAAKYGAGGLAPGVGGLAPAVGGLAPGVGGLVPGVGGLVPGVGGLAPGVGGLAPGVGAVPGVGGPAAAAKAAAKAAKYGAGVGGVPGAVPGAVPGVPGVPGVTPGVGGVPSLVPGVGVPGVGVLPGAGIPQVGVQPGAKPPKFGVPGAGVPGVGGIPGGLGVGGLGVGGLGAGGLGAGVGVPGFGVSPIFPGGVGGQLGFGGKPPKTYGGALGALGFRGGVGCAQGKYCGRKRK.

Residues 1–24 form the signal peptide; the sequence is ARQAAAPLLPGVLLLFSILPASQQ. 4-hydroxyproline is present on residues P32, P67, P102, P176, P189, P192, and P211. Copy 1 of the repeat occupies 83–127; sequence GAGVGGLGAGLGAFPGAAFPGAASAAALKAAAKAGAGLGGVGGIG. Residues 83-686 are 8 X tandem repeats; that stretch reads GAGVGGLGAG…GVGGLGVGGL (604 aa). Repeat copies occupy residues 219 to 262, 263 to 318, 319 to 393, 394 to 482, 483 to 554, 555 to 619, and 620 to 686. 4-hydroxyproline is present on residues P276, P345, P363, P368, P441, P455, and P480. 4-hydroxyproline occurs at positions 576, 635, and 720. A disulfide bridge links C739 with C745.

It belongs to the elastin family. In terms of assembly, the polymeric elastin chains are cross-linked together into an extensible 3D network. Post-translationally, elastin is formed through the cross-linking of its soluble precursor tropoelastin. Cross-linking is initiated through the action of lysyl oxidase on exposed lysines to form allysine. Subsequent spontaneous condensation reactions with other allysine or unmodified lysine residues result in various bi-, tri-, and tetrafunctional cross-links. The most abundant cross-links in mature elastin fibers are lysinonorleucine, allysine aldol, desmosine, and isodesmosine. In terms of processing, hydroxylated on proline residues. Hydroxylation on proline residues within the sequence motif, GXPG, is most likely to be 4-hydroxy as this fits the requirement for 4-hydroxylation in vertebrates.

The protein resides in the secreted. Its subcellular location is the extracellular space. It is found in the extracellular matrix. Its function is as follows. Major structural protein of tissues such as aorta and nuchal ligament, which must expand rapidly and recover completely. In Gallus gallus (Chicken), this protein is Elastin (ELN).